Here is a 166-residue protein sequence, read N- to C-terminus: C-signal (166 aa).

In terms of processing, the mature C-signal (p17) is derived from the precursor sequence (p25) by proteolytic cleavage. The subtilisin-like protease PopC is directly responsible for cleavage of p25 to p17. The cleavage site is probably located between amino acid residues 60 and 68 in p25.

It is found in the secreted. Its subcellular location is the cell outer membrane. Its activity is regulated as follows. Synthesized as a precursor protein (p25), which is cleaved after secretion to generate the mature active C-signal (p17). The p25 precursor purified from M.xanthus cells does not display C-signal activity. In terms of biological role, cell-cell signaling protein required for fruiting body formation, a multicellular developmental program that is induced in response to starvation. Necessary for rippling, cellular aggregation, spore differentiation and for gene expression that is initiated after 6 hours of starvation. In starving cells, the C-signal directly induces aggregation and sporulation, which are induced at distinct threshold levels of C-signaling. Contact with C-signaling induces cells to glide with high speed and low stop and reversal frequencies toward aggregation centers. The C-signal acts as a morphogen and induces distinct events at distinct threshold levels. A regulated increase in the level of C-signaling during development ensures the correct temporal order of aggregation and sporulation. The polypeptide is C-signal (Myxococcus xanthus).